A 657-amino-acid polypeptide reads, in one-letter code: Pyoverdine export ATP-binding/permease protein PvdT (657 aa).

The region spanning 6–245 (IDLRNIRKSY…LSANAGALQA (240 aa)) is the ABC transporter domain. 43–50 (GASGSGKS) contacts ATP. The next 4 helical transmembrane spans lie at 285–305 (ALTL…LAVG), 532–552 (LSLM…IGVM), 590–610 (LSVV…GILI), and 620–640 (LAAV…FGFM).

The protein belongs to the ABC transporter superfamily. Macrolide exporter (TC 3.A.1.122) family. In terms of assembly, part of the tripartite efflux system PvdRT-OpmQ, which is composed of an inner membrane component with both ATPase and permease domains, PvdT, a periplasmic membrane fusion protein, PvdR, and an outer membrane component, OpmQ.

The protein resides in the cell inner membrane. Functionally, part of the tripartite efflux system PvdRT-OpmQ required for the secretion into the extracellular milieu of the siderophore pyoverdine (PVD), which is involved in iron acquisition. This subunit binds PVD and drives its secretion by hydrolyzing ATP. The system is responsible for export of newly synthesized PVD after the final steps of biosynthesis have taken place in the periplasm. It is also responsible for recycling of PVD after internalization of ferri-PVD into the periplasm by the outer-membrane receptor FpvA and release of iron from PVD, thus making PVD available for new cycles of iron uptake. In Pseudomonas fluorescens (strain ATCC BAA-477 / NRRL B-23932 / Pf-5), this protein is Pyoverdine export ATP-binding/permease protein PvdT.